Reading from the N-terminus, the 260-residue chain is Methyl-coenzyme M reductase subunit gamma (260 aa).

Residue R123 participates in coenzyme M binding.

This sequence belongs to the methyl-coenzyme M reductase gamma subunit family. As to quaternary structure, MCR is a hexamer of two alpha, two beta, and two gamma chains, forming a dimer of heterotrimers. It depends on coenzyme F430 as a cofactor.

The protein resides in the cytoplasm. It carries out the reaction coenzyme B + methyl-coenzyme M = methane + coenzyme M-coenzyme B heterodisulfide. It participates in one-carbon metabolism; methyl-coenzyme M reduction; methane from methyl-coenzyme M: step 1/1. In terms of biological role, component of the methyl-coenzyme M reductase (MCR) I that catalyzes the reductive cleavage of methyl-coenzyme M (CoM-S-CH3 or 2-(methylthio)ethanesulfonate) using coenzyme B (CoB or 7-mercaptoheptanoylthreonine phosphate) as reductant which results in the production of methane and the mixed heterodisulfide of CoB and CoM (CoM-S-S-CoB). This is the final step in methanogenesis. The polypeptide is Methyl-coenzyme M reductase subunit gamma (mcrG) (Methanococcus vannielii).